Reading from the N-terminus, the 532-residue chain is MNFGRVNPAQTLDAQGITGLGEVHYNLIEPALVEAAVTRGEGRLGRGGAFLCSTGAFTGRSPKDKFVVRTPSVEDTIWWENNAPMDPAAFDRLHADMLEHMKGRTYFVQDLFAGADPELRLDVRMVTELAWHGLFIRHMLRRPERAELDSFVPDWTVINCPSFKADPERHGCRTDTVIVLNFERKLILIANTEYAGENKKSVFTLLNYILPGKGVMAMHCSANHALGDTDDAAVFFGLSGTGKTTLSADPSRTLIGDDEHGWSDRGTFNFEGGCYAKTINLSAEAEPEIYATTSKFATVVENMVYDEETLELDFNDDSLTANTRCAYPLDYISNASESGLGGHPKNVIMLTCDAFGVLPPIARLTPAQAMYHFLSGFTSKVAGTERGVTEPQPTFSTCFGAPFMPRRPEVYGKLLQEKIAKHGATCWLVNTGWTGGAYGTGKRMPIKATRALLTAALDGSLSGVQFRRDPNFGFEVPVDLHGVDAKLLDPRSTWADPAAYDQQAKKLVEMFANNFAQYVPFIDADVKAAAIG.

Positions 60, 194, and 200 each coordinate substrate. Residues lysine 200, histidine 219, and 237–245 (GLSGTGKTT) contribute to the ATP site. Residues lysine 200 and histidine 219 each coordinate Mn(2+). Aspartate 258 contributes to the Mn(2+) binding site. Residues glutamate 286, arginine 324, and threonine 449 each contribute to the ATP site. Arginine 324 lines the substrate pocket.

Belongs to the phosphoenolpyruvate carboxykinase (ATP) family. The cofactor is Mn(2+).

The protein localises to the cytoplasm. It catalyses the reaction oxaloacetate + ATP = phosphoenolpyruvate + ADP + CO2. It functions in the pathway carbohydrate biosynthesis; gluconeogenesis. Functionally, involved in the gluconeogenesis. Catalyzes the conversion of oxaloacetate (OAA) to phosphoenolpyruvate (PEP) through direct phosphoryl transfer between the nucleoside triphosphate and OAA. This is Phosphoenolpyruvate carboxykinase (ATP) from Cereibacter sphaeroides (strain ATCC 17029 / ATH 2.4.9) (Rhodobacter sphaeroides).